The following is a 510-amino-acid chain: Pyruvate kinase, cytosolic isozyme (510 aa).

R50 contacts substrate. K(+) is bound by residues N52, S54, D84, and T85. 52-55 (NFSH) serves as a coordination point for ATP. ATP contacts are provided by R91 and K176. E242 contributes to the Mg(2+) binding site. Substrate-binding residues include G265, D266, and T298. D266 provides a ligand contact to Mg(2+).

This sequence belongs to the pyruvate kinase family. As to quaternary structure, homotetramer. It depends on Mg(2+) as a cofactor. K(+) serves as cofactor.

It is found in the cytoplasm. The enzyme catalyses pyruvate + ATP = phosphoenolpyruvate + ADP + H(+). The protein operates within carbohydrate degradation; glycolysis; pyruvate from D-glyceraldehyde 3-phosphate: step 5/5. The chain is Pyruvate kinase, cytosolic isozyme from Solanum tuberosum (Potato).